The following is a 943-amino-acid chain: Translation initiation factor IF-2 (943 aa).

Residues 99-113 (VKAAQTQAAPVQPEQ) show a composition bias toward low complexity. Residues 99–354 (VKAAQTQAAP…LEPNQHAFQA (256 aa)) form a disordered region. Basic and acidic residues predominate over residues 117–141 (DAVKARAEAAARAEARAKAEAEAAK). Residues 145–172 (AKAGNKAKPAAQKPTEAKAETAPVAAET) are compositionally biased toward low complexity. Positions 173 to 197 (KPAEPKEKAVKPKHERNGKGKDAKK) are enriched in basic and acidic residues. Residues 200–215 (KPAAPAVPQPVVSAEE) are compositionally biased toward low complexity. Residues 216–250 (QAQRDEEARRAAALRAHQEALLKEKQERQARREAM) show a composition bias toward basic and acidic residues. A compositionally biased stretch (low complexity) spans 251–264 (KQQAEQQAKAAQEA). Composition is skewed to basic and acidic residues over residues 295–308 (AKKE…DEGQ) and 319–335 (GGRD…ERVR). Positions 443-612 (PRPPVVTVMG…LLEAEVLELT (170 aa)) constitute a tr-type G domain. Positions 452-459 (GHVDHGKT) are G1. 452–459 (GHVDHGKT) provides a ligand contact to GTP. A G2 region spans residues 477–481 (GITQH). The tract at residues 498 to 501 (DTPG) is G3. GTP is bound by residues 498 to 502 (DTPGH) and 552 to 555 (NKID). The segment at 552–555 (NKID) is G4. The G5 stretch occupies residues 588-590 (SAK).

This sequence belongs to the TRAFAC class translation factor GTPase superfamily. Classic translation factor GTPase family. IF-2 subfamily.

The protein localises to the cytoplasm. Functionally, one of the essential components for the initiation of protein synthesis. Protects formylmethionyl-tRNA from spontaneous hydrolysis and promotes its binding to the 30S ribosomal subunits. Also involved in the hydrolysis of GTP during the formation of the 70S ribosomal complex. The polypeptide is Translation initiation factor IF-2 (Neisseria gonorrhoeae (strain ATCC 700825 / FA 1090)).